Reading from the N-terminus, the 369-residue chain is 4-hydroxy-3-methylbut-2-en-1-yl diphosphate synthase (flavodoxin) (369 aa).

C270, C273, C305, and E312 together coordinate [4Fe-4S] cluster.

This sequence belongs to the IspG family. Requires [4Fe-4S] cluster as cofactor.

The enzyme catalyses (2E)-4-hydroxy-3-methylbut-2-enyl diphosphate + oxidized [flavodoxin] + H2O + 2 H(+) = 2-C-methyl-D-erythritol 2,4-cyclic diphosphate + reduced [flavodoxin]. It participates in isoprenoid biosynthesis; isopentenyl diphosphate biosynthesis via DXP pathway; isopentenyl diphosphate from 1-deoxy-D-xylulose 5-phosphate: step 5/6. Converts 2C-methyl-D-erythritol 2,4-cyclodiphosphate (ME-2,4cPP) into 1-hydroxy-2-methyl-2-(E)-butenyl 4-diphosphate. The protein is 4-hydroxy-3-methylbut-2-en-1-yl diphosphate synthase (flavodoxin) of Psychromonas ingrahamii (strain DSM 17664 / CCUG 51855 / 37).